Consider the following 105-residue polypeptide: Intracellular chorismate mutase (105 aa).

A Chorismate mutase domain is found at 23–105 (SQPVPEIDTL…LRLGRGRLGH (83 aa)). Arginine 61, valine 70, and glutamate 74 together coordinate chorismate.

In terms of assembly, homodimer. Interacts with AroG.

The protein resides in the cytoplasm. The catalysed reaction is chorismate = prephenate. It functions in the pathway metabolic intermediate biosynthesis; prephenate biosynthesis; prephenate from chorismate: step 1/1. Its activity is regulated as follows. The formation of the complex with AroG activates the chorismate mutase activity. In terms of biological role, catalyzes the Claisen rearrangement of chorismate to prephenate. Probably involved in the aromatic amino acid biosynthesis. This chain is Intracellular chorismate mutase, found in Mycobacterium bovis (strain ATCC BAA-935 / AF2122/97).